Consider the following 230-residue polypeptide: Ly6/PLAUR domain-containing protein 8 (230 aa).

Positions 1–20 (MKSFLFAGIVVVLTVAAVDT) are cleaved as a signal peptide. N-linked (GlcNAc...) asparagine glycans are attached at residues Asn-37, Asn-44, Asn-74, Asn-77, Asn-90, Asn-106, Asn-110, Asn-132, Asn-137, Asn-156, Asn-168, Asn-181, and Asn-197. Residues 125 to 172 (CPACYGNNETSCNETRKCYGERCVSIIAEFTNETKTLVLKGCSNVSIS) form the UPAR/Ly6 domain. Ser-211 is lipidated: GPI-anchor amidated serine. Positions 212 to 230 (QASFTPLALASILLLSLLL) are cleaved as a propeptide — removed in mature form.

It belongs to the CNF-like-inhibitor family. Highly N-glycosylated. Not O-glycosylated. In terms of processing, GPI-anchored. The GPI-anchor is cleaved, leading to secretion into the colonic lumen.

It is found in the cell membrane. Its subcellular location is the secreted. In terms of biological role, secreted protein specifically required to prevent invasion of Gram-negative bacteria in the inner mucus layer of the colon epithelium, a portion of the large intestine which is free of commensal microbiota. Prevents invasion of flagellated microbiota by binding to the flagellum of bacteria, such as P.mirabilis, thereby inhibiting bacterial motility in the intestinal lumen. Segregation of intestinal bacteria and epithelial cells in the colon is required to preserve intestinal homeostasis. This Bos taurus (Bovine) protein is Ly6/PLAUR domain-containing protein 8 (LYPD8).